The following is a 438-amino-acid chain: Ubiquitin carboxyl-terminal hydrolase 27 (438 aa).

The region spanning 78–421 (RGLINLGNTC…EGYLLFYHKQ (344 aa)) is the USP domain. C87 functions as the Nucleophile in the catalytic mechanism. The Proton acceptor role is filled by H380.

This sequence belongs to the peptidase C19 family. In terms of assembly, interacts with phosphorylated BCL2L11 isoform BIMEL; this interaction leads to BCL2L11 deubiquitination and stabilization.

Its subcellular location is the cytoplasm. It is found in the cytosol. It localises to the nucleus. It catalyses the reaction Thiol-dependent hydrolysis of ester, thioester, amide, peptide and isopeptide bonds formed by the C-terminal Gly of ubiquitin (a 76-residue protein attached to proteins as an intracellular targeting signal).. Deubiquitinase involved in innate antiviral immunity by mediating deubiquitination of CGAS and RIGI. Negatively regulates RIGI by mediating 'Lys-63'-linked deubiquitination of RIGI, inhibiting type I interferon signaling. Also regulates 'Lys-63'-linked ubiquitination level of MDA5/IFIH1. Acts as a positive regulator of the cGAS-STING pathway by catalyzing 'Lys-48'-linked deubiquitination of CGAS, thereby promoting its stabilization. Can reduce the levels of BCL2L11/BIM ubiquitination and stabilize BCL2L11 in response to the RAF-MAPK-degradation signal. By acting on BCL2L11 levels, may counteract the anti-apoptotic effects of MAPK activity. This is Ubiquitin carboxyl-terminal hydrolase 27 from Mus musculus (Mouse).